A 144-amino-acid chain; its full sequence is L-fucose mutarotase (144 aa).

The Proton donor role is filled by His22. Substrate-binding positions include Asp30, Arg109, and 131-133 (YGN).

This sequence belongs to the RbsD / FucU family. FucU mutarotase subfamily. As to quaternary structure, homodecamer.

It is found in the cytoplasm. It carries out the reaction alpha-L-fucose = beta-L-fucose. The protein operates within carbohydrate metabolism; L-fucose metabolism. Involved in the anomeric conversion of L-fucose. The protein is L-fucose mutarotase of Haemophilus influenzae (strain 86-028NP).